The sequence spans 418 residues: UDP-N-acetylglucosamine 1-carboxyvinyltransferase (418 aa).

22-23 (KN) serves as a coordination point for phosphoenolpyruvate. R92 provides a ligand contact to UDP-N-acetyl-alpha-D-glucosamine. The Proton donor role is filled by C116. At C116 the chain carries 2-(S-cysteinyl)pyruvic acid O-phosphothioketal. Residues 121–125 (RPVDL), D305, and I327 each bind UDP-N-acetyl-alpha-D-glucosamine.

The protein belongs to the EPSP synthase family. MurA subfamily.

The protein resides in the cytoplasm. The enzyme catalyses phosphoenolpyruvate + UDP-N-acetyl-alpha-D-glucosamine = UDP-N-acetyl-3-O-(1-carboxyvinyl)-alpha-D-glucosamine + phosphate. The protein operates within cell wall biogenesis; peptidoglycan biosynthesis. Its function is as follows. Cell wall formation. Adds enolpyruvyl to UDP-N-acetylglucosamine. This chain is UDP-N-acetylglucosamine 1-carboxyvinyltransferase, found in Acidiphilium cryptum (strain JF-5).